The primary structure comprises 253 residues: Mediator of RNA polymerase II transcription subunit 10 (253 aa).

Disordered stretches follow at residues 32-63, 88-109, and 206-253; these read YDTNPSSSNNNTPTSSRASGGGGGGGGGHASS, LPSSPSSGPSNNQPQQGTTELE, and VEAT…QSGQ. Residues 34–47 show a composition bias toward low complexity; sequence TNPSSSNNNTPTSS. Over residues 50–60 the composition is skewed to gly residues; that stretch reads SGGGGGGGGGH. A compositionally biased stretch (low complexity) spans 88–104; sequence LPSSPSSGPSNNQPQQG. Residues 231-253 are compositionally biased toward gly residues; the sequence is SAGGEGQQGQGQGQQGQGQQSGQ.

The protein belongs to the Mediator complex subunit 10 family. Component of the Mediator complex.

Its subcellular location is the nucleus. Its function is as follows. Component of the Mediator complex, a coactivator involved in the regulated transcription of nearly all RNA polymerase II-dependent genes. Mediator functions as a bridge to convey information from gene-specific regulatory proteins to the basal RNA polymerase II transcription machinery. Mediator is recruited to promoters by direct interactions with regulatory proteins and serves as a scaffold for the assembly of a functional preinitiation complex with RNA polymerase II and the general transcription factors. This Neurospora crassa (strain ATCC 24698 / 74-OR23-1A / CBS 708.71 / DSM 1257 / FGSC 987) protein is Mediator of RNA polymerase II transcription subunit 10 (nut2).